We begin with the raw amino-acid sequence, 238 residues long: Adenylate dimethylallyltransferase (238 aa).

The protein belongs to the isopentenyl transferase family.

The enzyme catalyses dimethylallyl diphosphate + AMP = N(6)-(dimethylallyl)adenosine 5'-phosphate + diphosphate. Functionally, transfers dimethylallyl groups to AMP as part of the biosynthesis of cytokinin phytohormones. This is Adenylate dimethylallyltransferase (tzs) from Ralstonia solanacearum (Pseudomonas solanacearum).